A 55-amino-acid chain; its full sequence is Large ribosomal subunit protein bL33 (55 aa).

Residues 1 to 11 (MAKGGREKIKL) are compositionally biased toward basic and acidic residues. Residues 1 to 26 (MAKGGREKIKLESTAGTGHFYTTDKN) form a disordered region.

This sequence belongs to the bacterial ribosomal protein bL33 family.

The sequence is that of Large ribosomal subunit protein bL33 from Methylibium petroleiphilum (strain ATCC BAA-1232 / LMG 22953 / PM1).